The chain runs to 141 residues: Large ribosomal subunit protein uL11 (141 aa).

The protein belongs to the universal ribosomal protein uL11 family. Part of the ribosomal stalk of the 50S ribosomal subunit. Interacts with L10 and the large rRNA to form the base of the stalk. L10 forms an elongated spine to which L12 dimers bind in a sequential fashion forming a multimeric L10(L12)X complex. Post-translationally, one or more lysine residues are methylated.

Its function is as follows. Forms part of the ribosomal stalk which helps the ribosome interact with GTP-bound translation factors. The sequence is that of Large ribosomal subunit protein uL11 from Sulfurimonas denitrificans (strain ATCC 33889 / DSM 1251) (Thiomicrospira denitrificans (strain ATCC 33889 / DSM 1251)).